We begin with the raw amino-acid sequence, 441 residues long: tRNA modification GTPase MnmE (441 aa).

3 residues coordinate (6S)-5-formyl-5,6,7,8-tetrahydrofolate: arginine 22, glutamate 80, and lysine 118. A TrmE-type G domain is found at 213-366 (GIYIAIVGEP…LLNLIKQRVE (154 aa)). GTP contacts are provided by residues 223–228 (NSGKST), 242–248 (SEYAGTT), and 267–270 (DTAG). Serine 227 and threonine 248 together coordinate Mg(2+). Position 441 (lysine 441) interacts with (6S)-5-formyl-5,6,7,8-tetrahydrofolate.

The protein belongs to the TRAFAC class TrmE-Era-EngA-EngB-Septin-like GTPase superfamily. TrmE GTPase family. In terms of assembly, homodimer. Heterotetramer of two MnmE and two MnmG subunits. The cofactor is K(+).

Its subcellular location is the cytoplasm. Functionally, exhibits a very high intrinsic GTPase hydrolysis rate. Involved in the addition of a carboxymethylaminomethyl (cmnm) group at the wobble position (U34) of certain tRNAs, forming tRNA-cmnm(5)s(2)U34. This Ehrlichia canis (strain Jake) protein is tRNA modification GTPase MnmE.